Here is a 203-residue protein sequence, read N- to C-terminus: Recombination protein RecR (203 aa).

The C4-type zinc finger occupies 58 to 73 (CDYCGNLDVVSICNIC). The 97-residue stretch at 81-177 (SIIAIVESVA…KISKLASGIP (97 aa)) folds into the Toprim domain.

The protein belongs to the RecR family.

In terms of biological role, may play a role in DNA repair. It seems to be involved in an RecBC-independent recombinational process of DNA repair. It may act with RecF and RecO. This chain is Recombination protein RecR, found in Orientia tsutsugamushi (strain Boryong) (Rickettsia tsutsugamushi).